Here is a 320-residue protein sequence, read N- to C-terminus: ATP-dependent 6-phosphofructokinase (320 aa).

G12 contributes to the ATP binding site. Residues R22 to R26 and R55 to D60 each bind ADP. ATP is bound by residues R73–F74 and G103–S106. Mg(2+) is bound at residue D104. T126–D128 contributes to the substrate binding site. The active-site Proton acceptor is the D128. R155 is a binding site for ADP. Substrate is bound by residues R163 and M170 to R172. Residues G186–E188, K212, and K214–H216 contribute to the ADP site. Residues E223, R244, and H250–R253 contribute to the substrate site.

This sequence belongs to the phosphofructokinase type A (PFKA) family. ATP-dependent PFK group I subfamily. Prokaryotic clade 'B1' sub-subfamily. In terms of assembly, homotetramer. Requires Mg(2+) as cofactor.

Its subcellular location is the cytoplasm. It carries out the reaction beta-D-fructose 6-phosphate + ATP = beta-D-fructose 1,6-bisphosphate + ADP + H(+). It participates in carbohydrate degradation; glycolysis; D-glyceraldehyde 3-phosphate and glycerone phosphate from D-glucose: step 3/4. Its activity is regulated as follows. Allosterically activated by ADP and other diphosphonucleosides, and allosterically inhibited by phosphoenolpyruvate. Catalyzes the phosphorylation of D-fructose 6-phosphate to fructose 1,6-bisphosphate by ATP, the first committing step of glycolysis. This is ATP-dependent 6-phosphofructokinase from Cronobacter sakazakii (strain ATCC BAA-894) (Enterobacter sakazakii).